Here is a 107-residue protein sequence, read N- to C-terminus: Glutaredoxin-1 (107 aa).

Position 2 is an N-acetylalanine (alanine 2). One can recognise a Glutaredoxin domain in the interval 3-106 (QEFVNCKIQS…ARLKQIGALQ (104 aa)). Position 9 is an N6-succinyllysine (lysine 9). 2 disulfides stabilise this stretch: cysteine 23–cysteine 26 and cysteine 79–cysteine 83.

This sequence belongs to the glutaredoxin family.

The protein resides in the cytoplasm. Has a glutathione-disulfide oxidoreductase activity in the presence of NADPH and glutathione reductase. Reduces low molecular weight disulfides and proteins. The sequence is that of Glutaredoxin-1 (Glrx) from Rattus norvegicus (Rat).